The sequence spans 399 residues: UDP-N-acetylglucosamine--N-acetylmuramyl-(pentapeptide) pyrophosphoryl-undecaprenol N-acetylglucosamine transferase (399 aa).

Basic residues predominate over residues 1–21 (MTSRFGHSHHPRRGRSARARA). The disordered stretch occupies residues 1–30 (MTSRFGHSHHPRRGRSARARAGRREGVQSN). Residues 58–60 (TGG), N170, R206, S234, I288, and Q333 each bind UDP-N-acetyl-alpha-D-glucosamine.

This sequence belongs to the glycosyltransferase 28 family. MurG subfamily.

It is found in the cell inner membrane. It catalyses the reaction di-trans,octa-cis-undecaprenyl diphospho-N-acetyl-alpha-D-muramoyl-L-alanyl-D-glutamyl-meso-2,6-diaminopimeloyl-D-alanyl-D-alanine + UDP-N-acetyl-alpha-D-glucosamine = di-trans,octa-cis-undecaprenyl diphospho-[N-acetyl-alpha-D-glucosaminyl-(1-&gt;4)]-N-acetyl-alpha-D-muramoyl-L-alanyl-D-glutamyl-meso-2,6-diaminopimeloyl-D-alanyl-D-alanine + UDP + H(+). Its pathway is cell wall biogenesis; peptidoglycan biosynthesis. Functionally, cell wall formation. Catalyzes the transfer of a GlcNAc subunit on undecaprenyl-pyrophosphoryl-MurNAc-pentapeptide (lipid intermediate I) to form undecaprenyl-pyrophosphoryl-MurNAc-(pentapeptide)GlcNAc (lipid intermediate II). In Acidovorax ebreus (strain TPSY) (Diaphorobacter sp. (strain TPSY)), this protein is UDP-N-acetylglucosamine--N-acetylmuramyl-(pentapeptide) pyrophosphoryl-undecaprenol N-acetylglucosamine transferase.